We begin with the raw amino-acid sequence, 307 residues long: N-acetylmuramic acid 6-phosphate etherase (307 aa).

The 164-residue stretch at 59–222 (TTKALSQGGK…STGVMVRLGK (164 aa)) folds into the SIS domain. Residue glutamate 87 is the Proton donor of the active site. Glutamate 118 is a catalytic residue.

This sequence belongs to the GCKR-like family. MurNAc-6-P etherase subfamily. Homodimer.

It catalyses the reaction N-acetyl-D-muramate 6-phosphate + H2O = N-acetyl-D-glucosamine 6-phosphate + (R)-lactate. Its pathway is amino-sugar metabolism; N-acetylmuramate degradation. In terms of biological role, specifically catalyzes the cleavage of the D-lactyl ether substituent of MurNAc 6-phosphate, producing GlcNAc 6-phosphate and D-lactate. The sequence is that of N-acetylmuramic acid 6-phosphate etherase from Trichodesmium erythraeum (strain IMS101).